Here is an 88-residue protein sequence, read N- to C-terminus: Small ribosomal subunit protein uS15c (88 aa).

This sequence belongs to the universal ribosomal protein uS15 family. As to quaternary structure, part of the 30S ribosomal subunit.

It is found in the plastid. It localises to the chloroplast. The chain is Small ribosomal subunit protein uS15c (rps15) from Lobularia maritima (Sweet alyssum).